The sequence spans 315 residues: MNDWTALTVTTTTEAIEAVSNILMEAGAVGIQIKDAADFKKETVDAHGTWFDPKTVPHLASGAQVIGYFDPATSLVEQRDHIATRVRGLAQFGLDPGAATVTLADVRQADWANVWKQYYHPLRVSRFLTIVPKWEHYTPQQAGELQLTLDPGMAFGTGTHPTTQLMLSLLESVIRGGETMIDVGTGSGILAIAAERLGVGDILATDVDEIAVRNAEANIKLNPVSHITVIANDLLKGITLSADLIVANILAEVLVPLIPQVRPRLKAHGHFLLAGIIANKATLIIRTLEDNGFSIAQRREAGGWVALDAVIKETA.

Thr-163, Gly-184, Asp-206, and Asn-248 together coordinate S-adenosyl-L-methionine.

The protein belongs to the methyltransferase superfamily. PrmA family.

The protein resides in the cytoplasm. It catalyses the reaction L-lysyl-[protein] + 3 S-adenosyl-L-methionine = N(6),N(6),N(6)-trimethyl-L-lysyl-[protein] + 3 S-adenosyl-L-homocysteine + 3 H(+). In terms of biological role, methylates ribosomal protein L11. In Lacticaseibacillus paracasei (strain ATCC 334 / BCRC 17002 / CCUG 31169 / CIP 107868 / KCTC 3260 / NRRL B-441) (Lactobacillus paracasei), this protein is Ribosomal protein L11 methyltransferase.